A 668-amino-acid polypeptide reads, in one-letter code: MAELATRVQELHHLLNKYSHEYYVQDNPSVPDSEYDKLLRELIDIENAHPEYKTEDSPTVRVGGEAQATFNKVRHDTPMLSLGNAFNEEELRRFDARVREKAGKVEYMCELKIDGLAVSLKYENGRFVQGLTRGDGTIGEDITANLRTIRAIPLRINKPLTFEVRGEAYMPKKSFEHLNQQKEEAGEQAFANPRNAAAGSLRQLDSKLAAKRRLSIFLYSVNDFTNFHAESQSEALDELDELGFKTNQNRKRVSDIDGVLEYIKYWTAHREELPYDIDGIVIKVNDLEEQEELGYTQKSPRWAIAYKFPAEEVVTKLLDIELSIGRTGVVTPTAVLEPVRVAGTTVSRASLHNEDLIHEKDIRIGDSVVIKKAGDIIPEVIRSLPDRRPEGTEPYHMPTHCPSCGHELVRLDGEVALRCINPKCPAQLVEGMIHFVSRQAMNIDGLGTKIIMQLYENEIIKDVGDLYYLTKDDLLPLERMGEKKADNLLNAIEASKKNSLEHLLFGLGIRHLGVKASQVIAERFETMDRLFKVTEEELLEIHDIGDKLATSLITYLNNKDIIALIEKLRRKNVNMTYEGIKTSEIQTDSEFNGKTVVLTGKLHNMTRTEASKWLEAQGAKTTSSVTKNTDLVIAGEDAGSKLTKAEKLGTEVWSEDEFIQKQKEVENK.

Residues 32-36 (DSEYD), 81-82 (SL), and Glu-110 contribute to the NAD(+) site. The N6-AMP-lysine intermediate role is filled by Lys-112. Residues Arg-133, Glu-167, Lys-283, and Lys-307 each contribute to the NAD(+) site. 4 residues coordinate Zn(2+): Cys-401, Cys-404, Cys-419, and Cys-424. Residues 586–668 (QTDSEFNGKT…IQKQKEVENK (83 aa)) enclose the BRCT domain.

It belongs to the NAD-dependent DNA ligase family. LigA subfamily. Mg(2+) serves as cofactor. The cofactor is Mn(2+).

The catalysed reaction is NAD(+) + (deoxyribonucleotide)n-3'-hydroxyl + 5'-phospho-(deoxyribonucleotide)m = (deoxyribonucleotide)n+m + AMP + beta-nicotinamide D-nucleotide.. In terms of biological role, DNA ligase that catalyzes the formation of phosphodiester linkages between 5'-phosphoryl and 3'-hydroxyl groups in double-stranded DNA using NAD as a coenzyme and as the energy source for the reaction. It is essential for DNA replication and repair of damaged DNA. This Staphylococcus carnosus (strain TM300) protein is DNA ligase.